A 313-amino-acid chain; its full sequence is Porphobilinogen deaminase (313 aa).

Cys-242 bears the S-(dipyrrolylmethanemethyl)cysteine mark.

Belongs to the HMBS family. Monomer. Dipyrromethane is required as a cofactor.

It catalyses the reaction 4 porphobilinogen + H2O = hydroxymethylbilane + 4 NH4(+). It participates in porphyrin-containing compound metabolism; protoporphyrin-IX biosynthesis; coproporphyrinogen-III from 5-aminolevulinate: step 2/4. In terms of biological role, tetrapolymerization of the monopyrrole PBG into the hydroxymethylbilane pre-uroporphyrinogen in several discrete steps. This is Porphobilinogen deaminase from Pectobacterium atrosepticum (strain SCRI 1043 / ATCC BAA-672) (Erwinia carotovora subsp. atroseptica).